A 683-amino-acid polypeptide reads, in one-letter code: Zinc finger protein 418 (683 aa).

The 76-residue stretch at 48–123 (VTIEDVTVYF…TPKQGQLRQK (76 aa)) folds into the KRAB domain. Positions 102 to 120 (QSLSQTEAPQVRTPKQGQL) are enriched in polar residues. Disordered regions lie at residues 102-124 (QSLSQTEAPQVRTPKQGQLRQKP) and 209-247 (DIPNGEKQNKIKRGKAFHRDKNNSESDEYKKSSSPQHRL). Positions 225–239 (FHRDKNNSESDEYKK) are enriched in basic and acidic residues. 14 consecutive C2H2-type zinc fingers follow at residues 287–309 (YECHVCGKWFGQKATLRIHQRRH), 315–337 (YKCGECGKSFCQSSNLSEHCRVH), 343–365 (FECLECGKAFGCHSSLLRHQRTH), 371–393 (YECSDCGRLFRQIVSLITHQRTH), 399–421 (YECGQCEKSFSHKATLTVHQRVH), 427–449 (YHCEACGKSFSQSANLIKHSKIH), 455–477 (YECGECGLCFRQRATLMKHQRTH), 483–505 (YECRECGKFFKQYFYLIEHRRIH), 511–533 (YECEQCGKSYTQKATLIRHQRVH), 539–561 (YKCEECGKAFEYKSRLKRHQRTH), 567–589 (YECAKCGKFFRESYNLAEHQKIH), 595–617 (YHCDQCGKCFSRRADLVKHQRVH), 623–645 (YTCGECGKTFSRTTNLVQHRRIH), and 651–673 (YECDQCGKSFSQVSTLTRHQLLH).

It belongs to the krueppel C2H2-type zinc-finger protein family.

The protein resides in the nucleus. Its function is as follows. Transcriptional repressor. May play a role as regulator of the ubiquitin-proteasome system and autophagy-lysosomal pathway. The chain is Zinc finger protein 418 from Rattus norvegicus (Rat).